The sequence spans 466 residues: Ribosome biogenesis protein YTM1 (466 aa).

The interval 11–99 (IKIKFFTNEE…EAFLTLEYTR (89 aa)) is ubiquitin-like (UBL) domain. Positions 109 to 466 (SFNNDDWISS…QINKGSDIAK (358 aa)) are sufficient for interaction with ERB1 and association with 66S pre-ribosomes. WD repeat units follow at residues 124-163 (PTTK…EKQY), 165-203 (GHSA…IIDE), 219-258 (GHKA…MTSI), 296-336 (GHSE…CVDT), 338-377 (TTGY…TSDQ), 384-424 (GHTN…SLYT), and 431-466 (STNA…DIAK).

It belongs to the WD repeat WDR12/YTM1 family. Component of the NOP7 complex, composed of ERB1, NOP7 and YTM1. The complex is held together by ERB1, which interacts with NOP7 via its N-terminal domain and with YTM1 via a high-affinity interaction between the seven-bladed beta-propeller domains of the 2 proteins. The NOP7 complex associates with the 66S pre-ribosome. Interacts (via UBL domain) with MDN1 (via VWFA/MIDAS domain).

It localises to the nucleus. Its subcellular location is the nucleolus. The protein localises to the nucleoplasm. In terms of biological role, component of the NOP7 complex, which is required for maturation of the 25S and 5.8S ribosomal RNAs and formation of the 60S ribosome. The sequence is that of Ribosome biogenesis protein YTM1 from Candida albicans (strain SC5314 / ATCC MYA-2876) (Yeast).